The primary structure comprises 252 residues: D-aminoacyl-tRNA deacylase (252 aa).

It belongs to the DtdA deacylase family. As to quaternary structure, monomer. It depends on Zn(2+) as a cofactor.

The enzyme catalyses a D-aminoacyl-tRNA + H2O = a tRNA + a D-alpha-amino acid + H(+). It carries out the reaction glycyl-tRNA(Ala) + H2O = tRNA(Ala) + glycine + H(+). Functionally, D-aminoacyl-tRNA deacylase with broad substrate specificity. By recycling D-aminoacyl-tRNA to D-amino acids and free tRNA molecules, this enzyme counteracts the toxicity associated with the formation of D-aminoacyl-tRNA entities in vivo. This chain is D-aminoacyl-tRNA deacylase, found in Pyrobaculum islandicum (strain DSM 4184 / JCM 9189 / GEO3).